Here is a 428-residue protein sequence, read N- to C-terminus: Adenylosuccinate synthetase (428 aa).

Residues G12–K18 and G40–T42 contribute to the GTP site. The Proton acceptor role is filled by D13. Positions 13 and 40 each coordinate Mg(2+). Residues D13–K16, N38–H41, T128, R142, Q223, T238, and R302 each bind IMP. H41 (proton donor) is an active-site residue. T298–R304 provides a ligand contact to substrate. Residues R304, K330 to D332, and S412 to G414 contribute to the GTP site.

It belongs to the adenylosuccinate synthetase family. As to quaternary structure, homodimer. The cofactor is Mg(2+).

The protein localises to the cytoplasm. The enzyme catalyses IMP + L-aspartate + GTP = N(6)-(1,2-dicarboxyethyl)-AMP + GDP + phosphate + 2 H(+). It functions in the pathway purine metabolism; AMP biosynthesis via de novo pathway; AMP from IMP: step 1/2. In terms of biological role, plays an important role in the de novo pathway of purine nucleotide biosynthesis. Catalyzes the first committed step in the biosynthesis of AMP from IMP. This is Adenylosuccinate synthetase from Desulforamulus reducens (strain ATCC BAA-1160 / DSM 100696 / MI-1) (Desulfotomaculum reducens).